Here is a 271-residue protein sequence, read N- to C-terminus: uncharacterized protein (271 aa).

Solcar repeat units follow at residues 3–74 (VQTL…AKRR), 81–163 (EGAI…SKKY), and 171–268 (DISV…FKSK). 6 helical membrane passes run 5–26 (TLMAASAGAVASRLLCHPIDTI), 49–69 (GLPISLTLITPATCLYLSTYV), 84–104 (ILYSICGMTAEVVSSFVWTPL), 138–158 (GYWMGVAIYLPTTVSWWVCYE), 170–190 (WDISVIAPICSALGTVVATTI), and 240–261 (FTRGLFTRMCYIMPSGMISMSV).

This sequence belongs to the mitochondrial carrier (TC 2.A.29) family.

It is found in the mitochondrion inner membrane. This is an uncharacterized protein from Schizosaccharomyces pombe (strain 972 / ATCC 24843) (Fission yeast).